The sequence spans 852 residues: Bifunctional uridylyltransferase/uridylyl-removing enzyme (852 aa).

Residues 1–318 (MPANLSSALE…SAPMRVTLRI (318 aa)) form a uridylyltransferase region. The tract at residues 319–672 (DDDYIQVNNQ…SRILFKSDSF (354 aa)) is uridylyl-removing. The 123-residue stretch at 436 to 558 (VDDHILTVVR…VQTHERLSAL (123 aa)) folds into the HD domain. ACT domains are found at residues 673-757 (QVMV…SHSR) and 785-852 (SVEI…EQLS).

It belongs to the GlnD family. Mg(2+) serves as cofactor.

It carries out the reaction [protein-PII]-L-tyrosine + UTP = [protein-PII]-uridylyl-L-tyrosine + diphosphate. The enzyme catalyses [protein-PII]-uridylyl-L-tyrosine + H2O = [protein-PII]-L-tyrosine + UMP + H(+). Its activity is regulated as follows. Uridylyltransferase (UTase) activity is inhibited by glutamine, while glutamine activates uridylyl-removing (UR) activity. Its function is as follows. Modifies, by uridylylation and deuridylylation, the PII regulatory proteins (GlnB and homologs), in response to the nitrogen status of the cell that GlnD senses through the glutamine level. Under low glutamine levels, catalyzes the conversion of the PII proteins and UTP to PII-UMP and PPi, while under higher glutamine levels, GlnD hydrolyzes PII-UMP to PII and UMP (deuridylylation). Thus, controls uridylylation state and activity of the PII proteins, and plays an important role in the regulation of nitrogen assimilation and metabolism. The sequence is that of Bifunctional uridylyltransferase/uridylyl-removing enzyme from Neisseria meningitidis serogroup A / serotype 4A (strain DSM 15465 / Z2491).